The chain runs to 525 residues: GMP synthase [glutamine-hydrolyzing] (525 aa).

The Glutamine amidotransferase type-1 domain occupies 9 to 207 (RILILDFGSQ…VRDICQCEAL (199 aa)). The active-site Nucleophile is C86. Active-site residues include H181 and E183. A GMPS ATP-PPase domain is found at 208-400 (WTPAKIIDDA…LGLPYDMLYR (193 aa)). 235–241 (SGGVDSS) provides a ligand contact to ATP.

In terms of assembly, homodimer.

The catalysed reaction is XMP + L-glutamine + ATP + H2O = GMP + L-glutamate + AMP + diphosphate + 2 H(+). The protein operates within purine metabolism; GMP biosynthesis; GMP from XMP (L-Gln route): step 1/1. Functionally, catalyzes the synthesis of GMP from XMP. This is GMP synthase [glutamine-hydrolyzing] from Escherichia coli (strain K12 / MC4100 / BW2952).